The primary structure comprises 554 residues: Inactive sesquithujene synthase B (554 aa).

Asp308 and Asp312 together coordinate Mg(2+). Residues Asp308, Asp312, Arg449, and Asn452 each coordinate substrate. The DDXXD motif signature appears at 308–312 (DDMFD). Mg(2+) contacts are provided by Asn452, Ser456, and Glu460.

It belongs to the terpene synthase family. As to quaternary structure, monomer. It depends on Mg(2+) as a cofactor. Requires Mn(2+) as cofactor.

Its subcellular location is the cytoplasm. Its pathway is secondary metabolite biosynthesis; terpenoid biosynthesis. Non-functional sesquiterpene synthase having less than 1% of the activity found in TPS5A. This Zea mays (Maize) protein is Inactive sesquithujene synthase B.